The sequence spans 482 residues: O-phosphoseryl-tRNA(Sec) selenium transferase (482 aa).

The interval 1–36 (MKSSFGKKEGEYSRLVSKSSNKLLNSLWEKKQIPEE) is tetramerization. Arginine 69 serves as a coordination point for pyridoxal 5'-phosphate. A phosphate loop (P-loop) region spans residues 90–100 (GRSGNLLEIQP). The substrate site is built by arginine 91, serine 92, and glutamine 99. An N6-(pyridoxal phosphate)lysine modification is found at lysine 277. Substrate is bound at residue arginine 306. Residue arginine 388 participates in tRNA binding. A disordered region spans residues 461 to 482 (DRRGGSSGRRVPMNESFDMEND).

It belongs to the SepSecS family. As to quaternary structure, homotetramer formed by a catalytic dimer and a non-catalytic dimer serving as a binding platform that orients tRNASec for catalysis. Each tetramer binds the CCA ends of two tRNAs which point to the active sites of the catalytic dimer. It depends on pyridoxal 5'-phosphate as a cofactor.

It is found in the cytoplasm. The enzyme catalyses O-phospho-L-seryl-tRNA(Sec) + selenophosphate + H2O = L-selenocysteinyl-tRNA(Sec) + 2 phosphate. It participates in aminoacyl-tRNA biosynthesis; selenocysteinyl-tRNA(Sec) biosynthesis; selenocysteinyl-tRNA(Sec) from L-seryl-tRNA(Sec) (archaeal/eukaryal route): step 2/2. In terms of biological role, converts O-phosphoseryl-tRNA(Sec) to selenocysteinyl-tRNA(Sec) required for selenoprotein biosynthesis. The chain is O-phosphoseryl-tRNA(Sec) selenium transferase (secs-1) from Caenorhabditis briggsae.